We begin with the raw amino-acid sequence, 101 residues long: Urease subunit beta (101 aa).

It belongs to the urease beta subunit family. As to quaternary structure, heterotrimer of UreA (gamma), UreB (beta) and UreC (alpha) subunits. Three heterotrimers associate to form the active enzyme.

The protein resides in the cytoplasm. The catalysed reaction is urea + 2 H2O + H(+) = hydrogencarbonate + 2 NH4(+). It functions in the pathway nitrogen metabolism; urea degradation; CO(2) and NH(3) from urea (urease route): step 1/1. The sequence is that of Urease subunit beta from Nostoc punctiforme (strain ATCC 29133 / PCC 73102).